Consider the following 286-residue polypeptide: MSGGLDILRLTADDVSKMLAASAHLGTTNVDYQMEQYVFRRRTDGVHIIDLRQTWEKLLIAARIIASIENPADVCVLSARPYGQRAVLKFAKFTGASPIAGRFTPGTFTNQIQKAYREPRLLIVTDPRVDHQPITEASYVNIPVIAFCNTDSRLRYIDVGIPCNNKGAHAIGLMWWLLAREVLRLRGTISRDTDWEHMPDLFFYRDPEEVEKEEQAQNNKWAAPEQSPALSAAVPSSAAPVEEWSSSPSKETTEWGASNTAAAAKSSWSNETGGEWGAQEGGEWGS.

Residues 213 to 286 are disordered; that stretch reads EEQAQNNKWA…GAQEGGEWGS (74 aa). Residues 227 to 241 show a composition bias toward low complexity; sequence SPALSAAVPSSAAPV. Residues 244 to 270 show a composition bias toward polar residues; that stretch reads WSSSPSKETTEWGASNTAAAAKSSWSN. The segment covering 274–286 has biased composition (gly residues); that stretch reads GEWGAQEGGEWGS.

Belongs to the universal ribosomal protein uS2 family. As to quaternary structure, component of the small ribosomal subunit. Mature ribosomes consist of a small (40S) and a large (60S) subunit. The 40S subunit contains about 33 different proteins and 1 molecule of RNA (18S). The 60S subunit contains about 49 different proteins and 3 molecules of RNA (28S, 5.8S and 5S). Interacts with ribosomal protein S21.

The protein localises to the cytoplasm. Its function is as follows. Required for the assembly and/or stability of the 40S ribosomal subunit. Required for the processing of the 20S rRNA-precursor to mature 18S rRNA in a late step of the maturation of 40S ribosomal subunits. This is Small ribosomal subunit protein uS2 from Trichoplax adhaerens (Trichoplax reptans).